A 122-amino-acid polypeptide reads, in one-letter code: Iron-sulfur cluster insertion protein ErpA (122 aa).

Residues Cys-50, Cys-114, and Cys-116 each contribute to the iron-sulfur cluster site.

This sequence belongs to the HesB/IscA family. In terms of assembly, homodimer. It depends on iron-sulfur cluster as a cofactor.

In terms of biological role, required for insertion of 4Fe-4S clusters for at least IspG. The protein is Iron-sulfur cluster insertion protein ErpA of Alkalilimnicola ehrlichii (strain ATCC BAA-1101 / DSM 17681 / MLHE-1).